The chain runs to 346 residues: Partitioning defective 6 homolog alpha (346 aa).

The segment at 1–116 (MARPQRTPAR…SNSLQRRKKG (116 aa)) is interaction with PRKCI and PRKCZ. One can recognise a PB1 domain in the interval 15–95 (IVEVKSKFDA…PPLRLLVQKR (81 aa)). The interaction with PARD3 and CDC42 stretch occupies residues 126-253 (RTRPPLLISL…VTVKPANQRN (128 aa)). The 18-residue stretch at 133 to 150 (ISLPQDFRQVSSVIDVDL) folds into the Pseudo-CRIB domain. Positions 157 to 250 (RVRLHKHGSD…NLIVTVKPAN (94 aa)) constitute a PDZ domain. 2 disordered regions span residues 257–294 (RGAS…HPPC) and 317–346 (GSSL…GFSL). S278 is modified (phosphoserine). Polar residues predominate over residues 317–332 (GSSLPSLDSREQANSG). S345 carries the phosphoserine modification.

Belongs to the PAR6 family. Interacts with PALS1 and CRB3. Interacts with PARD3. Interacts with GTP-bound forms of CDC42, RHOQ/TC10 and RAC1. Interacts with the N-terminal part of PRKCI and PRKCZ. Part of a complex with PARD3, CDC42 or RAC1 and PRKCI or PRKCZ. Part of a complex with LLGL1 and PRKCI. Interacts with MAP2K5. Interacts with TGFBR1; involved in TGF-beta induced epithelial to mesenchymal transition. Interacts with ECT2 ('Thr-359' phosphorylated form) and PRKCI. Interacts with DCTN1 and PCM1. Post-translationally, phosphorylated by the TGF-beta receptor. Ubiquitinated by the SCF(FBXO31) complex, leading to its proteasomal degradation.

It is found in the cytoplasm. The protein localises to the cell membrane. The protein resides in the cell junction. Its subcellular location is the tight junction. It localises to the cytoskeleton. It is found in the microtubule organizing center. The protein localises to the centrosome. The protein resides in the centriolar satellite. Adapter protein involved in asymmetrical cell division and cell polarization processes. Probably involved in the formation of epithelial tight junctions. Association with PARD3 may prevent the interaction of PARD3 with F11R/JAM1, thereby preventing tight junction assembly. The PARD6-PARD3 complex links GTP-bound Rho small GTPases to atypical protein kinase C proteins. Regulates centrosome organization and function. Essential for the centrosomal recruitment of key proteins that control centrosomal microtubule organization. The chain is Partitioning defective 6 homolog alpha (Pard6a) from Rattus norvegicus (Rat).